A 780-amino-acid polypeptide reads, in one-letter code: Vacuolar protein sorting-associated protein 51 homolog (780 aa).

Ala2 is modified (N-acetylalanine). Disordered regions lie at residues 270-292 (STLV…PAKI) and 615-651 (QGTF…SNSQ). The segment covering 273-284 (VEDDDSSNDTES) has biased composition (acidic residues). The span at 626–639 (SNGSNTTTSSRSNT) shows a compositional bias: low complexity.

It belongs to the VPS51 family. As to quaternary structure, component of the Golgi-associated retrograde protein (GARP) complex, composed by VPS51, VPS52, VPS53 and VPS54. Component of the endosome-associated retrograde protein (EARP) complex, composed of VPS51, VPS52, VPS53 and VPS50. Interacts with VPS52. In terms of tissue distribution, expressed in primary and lateral roots, shoots of seedlings and flowers.

Its subcellular location is the golgi apparatus. It is found in the trans-Golgi network. It localises to the recycling endosome. The protein localises to the prevacuolar compartment. Its function is as follows. Acts as a component of the GARP complex that is involved in retrograde transport from early and late endosomes to the trans-Golgi network (TGN). The GARP complex is required for the maintenance of protein retrieval from endosomes to the TGN, acid hydrolase sorting, lysosome function, endosomal cholesterol traffic and autophagy. VPS51 participates in retrograde transport of acid hydrolase receptors, likely by promoting tethering and SNARE-dependent fusion of endosome-derived carriers to the TGN. Acts as a component of the EARP complex that is involved in endocytic recycling. The EARP complex associates with Rab4-positive endosomes and promotes recycling of internalized transferrin receptor (TFRC) to the plasma membrane. Required for vacuolar targeting and cellular trafficking. Involved in the regulation of vascular tissue patterning, probably by regulating PIN1 expression pattern, thus modulating auxin flux. Important to prevent PIN1 accumulation within margin cells, possibly by targeting PIN1 to the lytic vacuole. Regulates PIN1 and ATHB8 expression pattern in secondary veins. The sequence is that of Vacuolar protein sorting-associated protein 51 homolog from Arabidopsis thaliana (Mouse-ear cress).